We begin with the raw amino-acid sequence, 312 residues long: MAIYLDFENHIKEIQNEIELALIRGDEDAKEILEKRLDKEVKSIYSNLTDFQKLQLARHPDRPYAMDYIDLILKDKYEVFGDRHYNDDKAIVCFIGKIDNIPVVVIGEEKGRGTKNKLLRNFGMPNPCGYRKALKMAKFAEKFNLPILMLVDTAGAYPGIGAEERGQSEAIAKNLQEFASLKVPTISVIIGEGGSGGALAIAVADKLAMMEYSIFSVISPEGCAAILWDDPSKTEVAIKAMKITPRDLKEAGLIDDIILEPSKGAHRDKFSAANTIKEYFLDALRTIQQDPHFLDNRYQKLMSLGSFVESMN.

The CoA carboxyltransferase C-terminal domain occupies Arg-36–Thr-286.

This sequence belongs to the AccA family. As to quaternary structure, acetyl-CoA carboxylase is a heterohexamer composed of biotin carboxyl carrier protein (AccB), biotin carboxylase (AccC) and two subunits each of ACCase subunit alpha (AccA) and ACCase subunit beta (AccD).

It is found in the cytoplasm. It catalyses the reaction N(6)-carboxybiotinyl-L-lysyl-[protein] + acetyl-CoA = N(6)-biotinyl-L-lysyl-[protein] + malonyl-CoA. It functions in the pathway lipid metabolism; malonyl-CoA biosynthesis; malonyl-CoA from acetyl-CoA: step 1/1. In terms of biological role, component of the acetyl coenzyme A carboxylase (ACC) complex. First, biotin carboxylase catalyzes the carboxylation of biotin on its carrier protein (BCCP) and then the CO(2) group is transferred by the carboxyltransferase to acetyl-CoA to form malonyl-CoA. The chain is Acetyl-coenzyme A carboxylase carboxyl transferase subunit alpha from Helicobacter pylori (strain G27).